A 357-amino-acid polypeptide reads, in one-letter code: Serine protease 1 (357 aa).

Residues 1–29 (MRRTTRARTGLSALLLAASLGLGAAPAGA) form the signal peptide. Residues 30-170 (DAPQRPAPTP…TRVPGVFQRE (141 aa)) constitute a propeptide that is removed on maturation. An intrachain disulfide couples Cys184 to Cys204. Active-site charge relay system residues include His203, Asp232, and Ser313. Cys307 and Cys333 are disulfide-bonded.

It belongs to the peptidase S1 family.

Its subcellular location is the secreted. Serine protease that preferentially cleaves peptide bonds on the C-terminal side of aspartate and glutamate with a 10-fold higher reactivity for a glutamyl bond than an aspartyl bond. The protein is Serine protease 1 of Streptomyces fradiae (Streptomyces roseoflavus).